Consider the following 489-residue polypeptide: Protein DETOXIFICATION 26 (489 aa).

The next 12 helical transmembrane spans lie at 42 to 62, 75 to 95, 125 to 145, 157 to 177, 190 to 210, 217 to 237, 271 to 291, 300 to 320, 342 to 362, 385 to 405, 416 to 436, and 442 to 462; these read IWYIVGPSIFTGLATYSILII, LAAISIINNFTLGFNYGLLLG, IILFLCCILLLPMYLFATPIL, LTGTIALWVIPVHFAFAFFFP, VIAISAGVSLAVHILVCWFFV, IIGTMASVNVPWWLNIFILFL, IMLCLENWYYKILMLMTGNLV, LSICMSVNGWEMMIPLAFFAG, IVSITLSLMIGLFFTVIIVIF, VLLAFTVLLNSVQPVLSGVAV, INLGCYYLIGLPFGLTMGWIF, and GIWAGMIFGGTAIQTLILIII.

This sequence belongs to the multi antimicrobial extrusion (MATE) (TC 2.A.66.1) family.

Its subcellular location is the membrane. This Arabidopsis thaliana (Mouse-ear cress) protein is Protein DETOXIFICATION 26.